We begin with the raw amino-acid sequence, 91 residues long: Small ribosomal subunit protein bS20 (91 aa).

The disordered stretch occupies residues 1–23 (MANTPSAKKRAKQAEKRRSHNAS). Basic residues predominate over residues 7 to 20 (AKKRAKQAEKRRSH).

The protein belongs to the bacterial ribosomal protein bS20 family.

Functionally, binds directly to 16S ribosomal RNA. The chain is Small ribosomal subunit protein bS20 from Pseudomonas aeruginosa (strain LESB58).